Reading from the N-terminus, the 66-residue chain is QPNLWRCEKDEEFVNCAPRCPQNCRNIRSYQPCLVLTPVCAPGCVCRSGKVKNDRGDCVSITDCFK.

5 disulfide bridges follow: Cys-7/Cys-44, Cys-16/Cys-40, Cys-20/Cys-33, Cys-24/Cys-64, and Cys-46/Cys-58. A TIL domain is found at Cys-7–Cys-64.

It belongs to the serine protease inhibitor-like (TIL domain-containing) family. As to expression, expressed by the venom gland.

Its subcellular location is the secreted. Its function is as follows. Serine protease inhibitor. The chain is Venom peptide CtAPI from Chaerilus tricostatus (Scorpion).